Consider the following 348-residue polypeptide: Sulfate/thiosulfate import ATP-binding protein CysA (348 aa).

The 235-residue stretch at 3–237 (IEVRNIVKEF…PASAFVHGFI (235 aa)) folds into the ABC transporter domain. 35 to 42 (GPSGSGKT) provides a ligand contact to ATP.

It belongs to the ABC transporter superfamily. Sulfate/tungstate importer (TC 3.A.1.6) family. The complex is composed of two ATP-binding proteins (CysA), two transmembrane proteins (CysT and CysW) and a solute-binding protein (CysP).

The protein localises to the cell inner membrane. It carries out the reaction sulfate(out) + ATP + H2O = sulfate(in) + ADP + phosphate + H(+). The enzyme catalyses thiosulfate(out) + ATP + H2O = thiosulfate(in) + ADP + phosphate + H(+). Functionally, part of the ABC transporter complex CysAWTP involved in sulfate/thiosulfate import. Responsible for energy coupling to the transport system. This Rhodopseudomonas palustris (strain ATCC BAA-98 / CGA009) protein is Sulfate/thiosulfate import ATP-binding protein CysA.